A 90-amino-acid polypeptide reads, in one-letter code: Probable Fe(2+)-trafficking protein (90 aa).

Belongs to the Fe(2+)-trafficking protein family.

Functionally, could be a mediator in iron transactions between iron acquisition and iron-requiring processes, such as synthesis and/or repair of Fe-S clusters in biosynthetic enzymes. The polypeptide is Probable Fe(2+)-trafficking protein (Aeromonas salmonicida (strain A449)).